The following is a 245-amino-acid chain: Ribosomal RNA small subunit methyltransferase G (245 aa).

Residues Gly-90, Leu-95, 140–141, and Arg-158 contribute to the S-adenosyl-L-methionine site; that span reads AE. The disordered stretch occupies residues 223–245; it reads VVSARRAKPPHPKSARTGKAGTR. A compositionally biased stretch (basic residues) spans 227-245; the sequence is RRAKPPHPKSARTGKAGTR.

Belongs to the methyltransferase superfamily. RNA methyltransferase RsmG family.

The protein localises to the cytoplasm. Specifically methylates the N7 position of guanine in position 518 of 16S rRNA. The chain is Ribosomal RNA small subunit methyltransferase G from Mycobacterium avium (strain 104).